The primary structure comprises 216 residues: MIF4G domain-containing protein A (216 aa).

Residues 2–199 (DSAWTALDME…LEILEFRASG (198 aa)) enclose the MIF4G domain.

The protein belongs to the MIF4GD family. In terms of assembly, interacts with eif4g1, eif4g2 and slbp; probably tethered by SLBP to the 3'-end of mRNAs ending with the histone stem-loop, it also interacts with eif4g1 which is bound to their 5'-end.

It is found in the cytoplasm. Its subcellular location is the nucleus. In terms of biological role, functions in replication-dependent translation of histone mRNAs which differ from other eukaryotic mRNAs in that they do not end with a poly-A tail but a stem-loop. May participate in circularizing those mRNAs specifically enhancing their translation. In Danio rerio (Zebrafish), this protein is MIF4G domain-containing protein A (mif4gda).